Here is a 790-residue protein sequence, read N- to C-terminus: Phenylalanine--tRNA ligase beta subunit (790 aa).

One can recognise a tRNA-binding domain in the interval 39–154 (PDSLNTVVTG…ADTPLGESAC (116 aa)). Positions 404–483 (FSPLSLSVRP…FVQKTQKILP (80 aa)) constitute a B5 domain. Mg(2+) is bound by residues Asp-457, Asp-463, Glu-466, and Glu-467. Residues 694-790 (PIYPASSRDI…KLANIGQGNS (97 aa)) form the FDX-ACB domain.

This sequence belongs to the phenylalanyl-tRNA synthetase beta subunit family. Type 1 subfamily. In terms of assembly, tetramer of two alpha and two beta subunits. The cofactor is Mg(2+).

It localises to the cytoplasm. The enzyme catalyses tRNA(Phe) + L-phenylalanine + ATP = L-phenylalanyl-tRNA(Phe) + AMP + diphosphate + H(+). This chain is Phenylalanine--tRNA ligase beta subunit, found in Chlamydia trachomatis serovar A (strain ATCC VR-571B / DSM 19440 / HAR-13).